Here is a 100-residue protein sequence, read N- to C-terminus: Aspartyl/glutamyl-tRNA(Asn/Gln) amidotransferase subunit C (100 aa).

The protein belongs to the GatC family. In terms of assembly, heterotrimer of A, B and C subunits.

The enzyme catalyses L-glutamyl-tRNA(Gln) + L-glutamine + ATP + H2O = L-glutaminyl-tRNA(Gln) + L-glutamate + ADP + phosphate + H(+). The catalysed reaction is L-aspartyl-tRNA(Asn) + L-glutamine + ATP + H2O = L-asparaginyl-tRNA(Asn) + L-glutamate + ADP + phosphate + 2 H(+). Functionally, allows the formation of correctly charged Asn-tRNA(Asn) or Gln-tRNA(Gln) through the transamidation of misacylated Asp-tRNA(Asn) or Glu-tRNA(Gln) in organisms which lack either or both of asparaginyl-tRNA or glutaminyl-tRNA synthetases. The reaction takes place in the presence of glutamine and ATP through an activated phospho-Asp-tRNA(Asn) or phospho-Glu-tRNA(Gln). In Dictyoglomus turgidum (strain DSM 6724 / Z-1310), this protein is Aspartyl/glutamyl-tRNA(Asn/Gln) amidotransferase subunit C.